The chain runs to 167 residues: Ribosome-binding factor A (167 aa).

Residues 127–167 are disordered; that stretch reads SRANAQYAGDADPYKHDEPDDDDFDDDDDVEVEDWDDDDEA. The segment covering 145–167 has biased composition (acidic residues); the sequence is PDDDDFDDDDDVEVEDWDDDDEA.

This sequence belongs to the RbfA family. Monomer. Binds 30S ribosomal subunits, but not 50S ribosomal subunits or 70S ribosomes.

Its subcellular location is the cytoplasm. Functionally, one of several proteins that assist in the late maturation steps of the functional core of the 30S ribosomal subunit. Associates with free 30S ribosomal subunits (but not with 30S subunits that are part of 70S ribosomes or polysomes). Required for efficient processing of 16S rRNA. May interact with the 5'-terminal helix region of 16S rRNA. In Bifidobacterium adolescentis (strain ATCC 15703 / DSM 20083 / NCTC 11814 / E194a), this protein is Ribosome-binding factor A.